Reading from the N-terminus, the 317-residue chain is Type II methyltransferase M.MgeORF184P (317 aa).

It belongs to the N(4)/N(6)-methyltransferase family.

It carries out the reaction a 2'-deoxyadenosine in DNA + S-adenosyl-L-methionine = an N(6)-methyl-2'-deoxyadenosine in DNA + S-adenosyl-L-homocysteine + H(+). Probably recognizes the double-stranded sequence 5'-CTAT-3' and methylates A-3 on only one strand; as the bacterial DNA is methylated on this sequence and this is the only type II methylase in the genome, it is probably responsible for all of the methylation on this site in the genome. The chain is Type II methyltransferase M.MgeORF184P from Mycoplasma genitalium (strain ATCC 33530 / DSM 19775 / NCTC 10195 / G37) (Mycoplasmoides genitalium).